A 547-amino-acid polypeptide reads, in one-letter code: Cytochrome P450 monooxygenase oblB (547 aa).

The next 2 membrane-spanning stretches (helical) occupy residues 42 to 62 (GAVGAIYAIYISGLVIYRLFL) and 242 to 262 (FDMFHLGAVSLPLFMGMPWLI). N-linked (GlcNAc...) asparagine glycosylation occurs at N277. Residues 345 to 365 (VLIGSGTMTTAGTMGFLCYYI) traverse the membrane as a helical segment. C489 contacts heme.

Belongs to the cytochrome P450 family. The cofactor is heme.

It is found in the membrane. The enzyme catalyses ophiobolin F + 4 reduced [NADPH--hemoprotein reductase] + 4 O2 = ophiobolin C + 4 oxidized [NADPH--hemoprotein reductase] + 6 H2O + 4 H(+). Its pathway is secondary metabolite biosynthesis; terpenoid biosynthesis. In terms of biological role, cytochrome P450 monooxygenase; part of the gene cluster that mediates the biosynthesis of the sesterterpenes ophiobolins, fungal phytotoxins with potential anti-cancer activities. The first step of the pathway is performed by the sesterterpene synthase oblA that possesses both prenyl transferase and terpene cyclase activity, converting isopentenyl diphosphate and dimethylallyl diphosphate into geranylfarnesyl diphosphate (GFPP) and further converting GFPP into ophiobolin F, respectively. Other sesterterpenoids (C(25) terpenoids) are found as minor products of oblA. The cytochrome P450 monooxygenase oblB then catalyzes a four-step oxidative transformation of ophiobolin F to yield ophiobolin C. The function of the cytochrome P450 monooxygenase oblE has still to be determined. The polypeptide is Cytochrome P450 monooxygenase oblB (Emericella variicolor (Aspergillus stellatus)).